A 472-amino-acid chain; its full sequence is Aspartyl/glutamyl-tRNA(Asn/Gln) amidotransferase subunit B (472 aa).

This sequence belongs to the GatB/GatE family. GatB subfamily. In terms of assembly, heterotrimer of A, B and C subunits.

It catalyses the reaction L-glutamyl-tRNA(Gln) + L-glutamine + ATP + H2O = L-glutaminyl-tRNA(Gln) + L-glutamate + ADP + phosphate + H(+). The enzyme catalyses L-aspartyl-tRNA(Asn) + L-glutamine + ATP + H2O = L-asparaginyl-tRNA(Asn) + L-glutamate + ADP + phosphate + 2 H(+). Its function is as follows. Allows the formation of correctly charged Asn-tRNA(Asn) or Gln-tRNA(Gln) through the transamidation of misacylated Asp-tRNA(Asn) or Glu-tRNA(Gln) in organisms which lack either or both of asparaginyl-tRNA or glutaminyl-tRNA synthetases. The reaction takes place in the presence of glutamine and ATP through an activated phospho-Asp-tRNA(Asn) or phospho-Glu-tRNA(Gln). This is Aspartyl/glutamyl-tRNA(Asn/Gln) amidotransferase subunit B from Campylobacter jejuni (strain RM1221).